The chain runs to 512 residues: Maturase K (512 aa).

It belongs to the intron maturase 2 family. MatK subfamily.

Its subcellular location is the plastid. The protein localises to the chloroplast. Usually encoded in the trnK tRNA gene intron. Probably assists in splicing its own and other chloroplast group II introns. In Koelreuteria paniculata (Goldenrain tree), this protein is Maturase K.